The primary structure comprises 149 residues: Calmodulin (149 aa).

Alanine 2 carries the post-translational modification N-acetylalanine. 4 EF-hand domains span residues glutamate 8–asparagine 43, proline 44–glutamate 79, aspartate 81–lysine 116, and leucine 117–lysine 149. Aspartate 21, aspartate 23, aspartate 25, threonine 27, glutamate 32, aspartate 57, aspartate 59, asparagine 61, threonine 63, glutamate 68, aspartate 94, aspartate 96, asparagine 98, and glutamate 105 together coordinate Ca(2+). Lysine 116 bears the N6,N6,N6-trimethyllysine mark. Ca(2+) contacts are provided by aspartate 130, aspartate 132, aspartate 134, glutamine 136, and glutamate 141.

It belongs to the calmodulin family.

Calmodulin mediates the control of a large number of enzymes, ion channels and other proteins by Ca(2+). Among the enzymes to be stimulated by the calmodulin-Ca(2+) complex are a number of protein kinases and phosphatases. In Suberites domuncula (Sponge), this protein is Calmodulin.